We begin with the raw amino-acid sequence, 485 residues long: Ribulose bisphosphate carboxylase large chain (485 aa).

Substrate contacts are provided by Asn124 and Thr174. Residue Lys176 is the Proton acceptor of the active site. Lys178 contributes to the substrate binding site. Residues Lys202, Asp204, and Glu205 each contribute to the Mg(2+) site. An N6-carboxylysine modification is found at Lys202. The Proton acceptor role is filled by His294. Substrate is bound by residues Arg295, His327, and Ser379.

This sequence belongs to the RuBisCO large chain family. Type I subfamily. Heterohexadecamer of 8 large chains and 8 small chains. Mg(2+) serves as cofactor.

It catalyses the reaction 2 (2R)-3-phosphoglycerate + 2 H(+) = D-ribulose 1,5-bisphosphate + CO2 + H2O. The enzyme catalyses D-ribulose 1,5-bisphosphate + O2 = 2-phosphoglycolate + (2R)-3-phosphoglycerate + 2 H(+). Its function is as follows. RuBisCO catalyzes two reactions: the carboxylation of D-ribulose 1,5-bisphosphate, the primary event in carbon dioxide fixation, as well as the oxidative fragmentation of the pentose substrate. Both reactions occur simultaneously and in competition at the same active site. In Rhodopseudomonas palustris (strain HaA2), this protein is Ribulose bisphosphate carboxylase large chain.